We begin with the raw amino-acid sequence, 161 residues long: Protein yippee-like B0546.4 (161 aa).

The Yippee domain maps to 14-111 (SLYGCVVCNT…IENANFEKIA (98 aa)). Residues Cys-18, Cys-21, Cys-74, and Cys-77 each contribute to the Zn(2+) site. The segment at 117-161 (PLGEDRQEAPPAPNLEMSRYPLEAEKKSRPQYRTVSVSSSSSAEC) is disordered. Low complexity predominate over residues 151 to 161 (VSVSSSSSAEC).

It belongs to the yippee family.

The chain is Protein yippee-like B0546.4 from Caenorhabditis elegans.